We begin with the raw amino-acid sequence, 75 residues long: Cytochrome c oxidase subunit 6C (75 aa).

Residues 1-13 (MASSALAKPQMRG) lie on the Mitochondrial matrix side of the membrane. Residues 14–54 (LLARRLRIHIVGAFVVSLGVAAFYKYAVAEPRKKAYADFYR) traverse the membrane as a helical segment. The Mitochondrial intermembrane portion of the chain corresponds to 55-75 (NYDSVKYFEEMRKAGVFQSVK).

It belongs to the cytochrome c oxidase subunit 6c family. Component of the cytochrome c oxidase (complex IV, CIV), a multisubunit enzyme composed of 14 subunits. The complex is composed of a catalytic core of 3 subunits MT-CO1, MT-CO2 and MT-CO3, encoded in the mitochondrial DNA, and 11 supernumerary subunits COX4I, COX5A, COX5B, COX6A, COX6B, COX6C, COX7A, COX7B, COX7C, COX8 and NDUFA4, which are encoded in the nuclear genome. The complex exists as a monomer or a dimer and forms supercomplexes (SCs) in the inner mitochondrial membrane with NADH-ubiquinone oxidoreductase (complex I, CI) and ubiquinol-cytochrome c oxidoreductase (cytochrome b-c1 complex, complex III, CIII), resulting in different assemblies (supercomplex SCI(1)III(2)IV(1) and megacomplex MCI(2)III(2)IV(2)).

The protein localises to the mitochondrion inner membrane. It participates in energy metabolism; oxidative phosphorylation. Component of the cytochrome c oxidase, the last enzyme in the mitochondrial electron transport chain which drives oxidative phosphorylation. The respiratory chain contains 3 multisubunit complexes succinate dehydrogenase (complex II, CII), ubiquinol-cytochrome c oxidoreductase (cytochrome b-c1 complex, complex III, CIII) and cytochrome c oxidase (complex IV, CIV), that cooperate to transfer electrons derived from NADH and succinate to molecular oxygen, creating an electrochemical gradient over the inner membrane that drives transmembrane transport and the ATP synthase. Cytochrome c oxidase is the component of the respiratory chain that catalyzes the reduction of oxygen to water. Electrons originating from reduced cytochrome c in the intermembrane space (IMS) are transferred via the dinuclear copper A center (CU(A)) of subunit 2 and heme A of subunit 1 to the active site in subunit 1, a binuclear center (BNC) formed by heme A3 and copper B (CU(B)). The BNC reduces molecular oxygen to 2 water molecules using 4 electrons from cytochrome c in the IMS and 4 protons from the mitochondrial matrix. This chain is Cytochrome c oxidase subunit 6C (COX6C), found in Nycticebus coucang (Slow loris).